We begin with the raw amino-acid sequence, 418 residues long: Serine hydroxymethyltransferase (418 aa).

(6S)-5,6,7,8-tetrahydrofolate is bound by residues Leu-120 and 124–126 (GHL). Lys-229 carries the N6-(pyridoxal phosphate)lysine modification. 353 to 355 (SPF) lines the (6S)-5,6,7,8-tetrahydrofolate pocket.

Belongs to the SHMT family. As to quaternary structure, homodimer. It depends on pyridoxal 5'-phosphate as a cofactor.

The protein localises to the cytoplasm. The enzyme catalyses (6R)-5,10-methylene-5,6,7,8-tetrahydrofolate + glycine + H2O = (6S)-5,6,7,8-tetrahydrofolate + L-serine. It functions in the pathway one-carbon metabolism; tetrahydrofolate interconversion. It participates in amino-acid biosynthesis; glycine biosynthesis; glycine from L-serine: step 1/1. Catalyzes the reversible interconversion of serine and glycine with tetrahydrofolate (THF) serving as the one-carbon carrier. This reaction serves as the major source of one-carbon groups required for the biosynthesis of purines, thymidylate, methionine, and other important biomolecules. Also exhibits THF-independent aldolase activity toward beta-hydroxyamino acids, producing glycine and aldehydes, via a retro-aldol mechanism. The polypeptide is Serine hydroxymethyltransferase (Psychrobacter sp. (strain PRwf-1)).